The chain runs to 528 residues: GMP synthase [glutamine-hydrolyzing] (528 aa).

The Glutamine amidotransferase type-1 domain maps to 13-204 (SILILDFGSQ…VYGISSCVAD (192 aa)). Cys90 serves as the catalytic Nucleophile. Residues His178 and Glu180 contribute to the active site. The 199-residue stretch at 205–403 (WTTETYIEET…LGLPDEIIKR (199 aa)) folds into the GMPS ATP-PPase domain. 232–238 (SGGVDSS) lines the ATP pocket.

In terms of assembly, homodimer.

The catalysed reaction is XMP + L-glutamine + ATP + H2O = GMP + L-glutamate + AMP + diphosphate + 2 H(+). The protein operates within purine metabolism; GMP biosynthesis; GMP from XMP (L-Gln route): step 1/1. Functionally, catalyzes the synthesis of GMP from XMP. This chain is GMP synthase [glutamine-hydrolyzing], found in Prochlorococcus marinus (strain MIT 9312).